Here is a 484-residue protein sequence, read N- to C-terminus: Glutamate--tRNA ligase (484 aa).

The 'HIGH' region motif lies at 11-21 (PSPTGLLHIGN). The 'KMSKS' region motif lies at 255-259 (KLSKR). An ATP-binding site is contributed by lysine 258.

The protein belongs to the class-I aminoacyl-tRNA synthetase family. Glutamate--tRNA ligase type 1 subfamily. As to quaternary structure, monomer.

It is found in the cytoplasm. The catalysed reaction is tRNA(Glu) + L-glutamate + ATP = L-glutamyl-tRNA(Glu) + AMP + diphosphate. Its function is as follows. Catalyzes the attachment of glutamate to tRNA(Glu) in a two-step reaction: glutamate is first activated by ATP to form Glu-AMP and then transferred to the acceptor end of tRNA(Glu). In Streptococcus agalactiae serotype III (strain NEM316), this protein is Glutamate--tRNA ligase.